The following is a 146-amino-acid chain: Cystatin-C (146 aa).

Residues 1–26 (MAGPLRAPLLLLAILAVALAVSPAAG) form the signal peptide. Position 43 is a phosphoserine (serine 43). The Secondary area of contact motif lies at 81-85 (QIVAG). Intrachain disulfides connect cysteine 99–cysteine 109 and cysteine 123–cysteine 143.

Belongs to the cystatin family.

It is found in the secreted. Its function is as follows. As an inhibitor of cysteine proteinases, this protein is thought to serve an important physiological role as a local regulator of this enzyme activity. This is Cystatin-C (CST3) from Macaca mulatta (Rhesus macaque).